The primary structure comprises 650 residues: uncharacterized protein (650 aa).

This is an uncharacterized protein from Caenorhabditis elegans.